A 57-amino-acid polypeptide reads, in one-letter code: uncharacterized protein (57 aa).

The N-terminal stretch at 1 to 22 (MNEIIITIIVLILLLFITLSRN) is a signal peptide. Residues 26–57 (NNQSNNGKKEKLIKCKKEVQQLRQKLDQLTFQ) adopt a coiled-coil conformation.

This is an uncharacterized protein from Acheta domesticus (House cricket).